The primary structure comprises 194 residues: WASH complex subunit 3 (194 aa).

At methionine 1 the chain carries N-acetylmethionine. Positions 46-74 form a coiled coil; that stretch reads TVCEEKLADLSLRIQQIETTLNILDAKLS. Disordered regions lie at residues 93 to 121 and 159 to 194; these read SVTN…QESE and EGLD…SFSD. Residues 103 to 121 show a composition bias toward polar residues; it reads TSEQPQQNSTQDSGLQESE.

It belongs to the CCDC53 family. In terms of assembly, component of the WASH core complex also described as WASH regulatory complex (SHRC) composed of WASH (WASHC1, WASH2P or WASH3P), WASHC2 (WASHC2A or WASHC2C), WASHC3, WASHC4 and WASHC5. The WASH core complex associates via WASHC2 with the F-actin-capping protein dimer (formed by CAPZA1, CAPZA2 or CAPZA3 and CAPZB) in a transient or substoichiometric manner which was initially described as WASH complex.

Its subcellular location is the early endosome. Acts as a component of the WASH core complex that functions as a nucleation-promoting factor (NPF) at the surface of endosomes, where it recruits and activates the Arp2/3 complex to induce actin polymerization, playing a key role in the fission of tubules that serve as transport intermediates during endosome sorting. This chain is WASH complex subunit 3, found in Homo sapiens (Human).